Consider the following 205-residue polypeptide: Outer-membrane lipoprotein carrier protein (205 aa).

The N-terminal stretch at 1–21 is a signal peptide; sequence MKKIVLLVTLVFSINYSFANA.

Belongs to the LolA family. As to quaternary structure, monomer.

The protein resides in the periplasm. Functionally, participates in the translocation of lipoproteins from the inner membrane to the outer membrane. Only forms a complex with a lipoprotein if the residue after the N-terminal Cys is not an aspartate (The Asp acts as a targeting signal to indicate that the lipoprotein should stay in the inner membrane). The protein is Outer-membrane lipoprotein carrier protein of Francisella philomiragia subsp. philomiragia (strain ATCC 25017 / CCUG 19701 / FSC 153 / O#319-036).